The following is a 596-amino-acid chain: Aspartic proteinase yapsin-7 (596 aa).

Residues 1 to 25 (MTCLILWYLWLISTFQLEFATASTA) form the signal peptide. Asn-26 and Asn-59 each carry an N-linked (GlcNAc...) asparagine glycan. Topologically, residues 26–575 (NTTTTAKSGT…SPYTFNKDPA (550 aa)) are lumenal. Residues 56–440 (YYVNSTFGTP…DLEDNTIAIA (385 aa)) enclose the Peptidase A1 domain. Residue Asp-74 is part of the active site. Asn-106, Asn-131, Asn-140, Asn-143, Asn-148, Asn-175, and Asn-308 each carry an N-linked (GlcNAc...) asparagine glycan. Asp-321 is a catalytic residue. N-linked (GlcNAc...) asparagine glycosylation is found at Asn-391, Asn-455, Asn-478, Asn-484, Asn-549, and Asn-552. Residues 576 to 596 (GHVTRIASLLLLSIFSILIVL) form a helical membrane-spanning segment.

It belongs to the peptidase A1 family.

The protein resides in the cytoplasm. Its subcellular location is the endoplasmic reticulum membrane. This is Aspartic proteinase yapsin-7 (YPS7) from Saccharomyces cerevisiae (strain ATCC 204508 / S288c) (Baker's yeast).